We begin with the raw amino-acid sequence, 173 residues long: Small ribosomal subunit protein uS9 (173 aa).

A disordered region spans residues 20 to 53 (SYTTESEVPVEGEYTSESVASRFGEPQPAAGLGR).

The protein belongs to the universal ribosomal protein uS9 family.

The protein is Small ribosomal subunit protein uS9 of Streptomyces avermitilis (strain ATCC 31267 / DSM 46492 / JCM 5070 / NBRC 14893 / NCIMB 12804 / NRRL 8165 / MA-4680).